Here is a 213-residue protein sequence, read N- to C-terminus: Orotate phosphoribosyltransferase (213 aa).

Residue lysine 26 coordinates 5-phospho-alpha-D-ribose 1-diphosphate. Residue 34 to 35 (FF) coordinates orotate. Residues 72–73 (YK), arginine 99, lysine 100, lysine 103, histidine 105, and 124–132 (DDVITAGTA) contribute to the 5-phospho-alpha-D-ribose 1-diphosphate site. The orotate site is built by threonine 128 and arginine 156.

Belongs to the purine/pyrimidine phosphoribosyltransferase family. PyrE subfamily. Homodimer. Requires Mg(2+) as cofactor.

The enzyme catalyses orotidine 5'-phosphate + diphosphate = orotate + 5-phospho-alpha-D-ribose 1-diphosphate. It participates in pyrimidine metabolism; UMP biosynthesis via de novo pathway; UMP from orotate: step 1/2. Functionally, catalyzes the transfer of a ribosyl phosphate group from 5-phosphoribose 1-diphosphate to orotate, leading to the formation of orotidine monophosphate (OMP). The sequence is that of Orotate phosphoribosyltransferase from Shigella sonnei (strain Ss046).